A 423-amino-acid polypeptide reads, in one-letter code: Glutamyl-tRNA(Gln) amidotransferase subunit A (423 aa).

A disordered region spans residues 1-20 (MSHNAFITEETIEPTDDGPL). The span at 10–19 (ETIEPTDDGP) shows a compositional bias: acidic residues. Catalysis depends on charge relay system residues lysine 28 and serine 103. Residues 75 to 108 (EFGMGTTTETSAFGPTENPAAEGRVPGGSSGGSA) are disordered. Residue serine 127 is the Acyl-ester intermediate of the active site. Positions 183 to 206 (DERDGTTREPPAGQPTYADAADGD) are disordered.

It belongs to the amidase family. GatA subfamily. Heterotrimer of A, B and C subunits.

The catalysed reaction is L-glutamyl-tRNA(Gln) + L-glutamine + ATP + H2O = L-glutaminyl-tRNA(Gln) + L-glutamate + ADP + phosphate + H(+). In terms of biological role, allows the formation of correctly charged Gln-tRNA(Gln) through the transamidation of misacylated Glu-tRNA(Gln) in organisms which lack glutaminyl-tRNA synthetase. The reaction takes place in the presence of glutamine and ATP through an activated gamma-phospho-Glu-tRNA(Gln). The chain is Glutamyl-tRNA(Gln) amidotransferase subunit A from Natronomonas pharaonis (strain ATCC 35678 / DSM 2160 / CIP 103997 / JCM 8858 / NBRC 14720 / NCIMB 2260 / Gabara) (Halobacterium pharaonis).